The following is a 363-amino-acid chain: 3-isopropylmalate dehydrogenase (363 aa).

78 to 91 (GKKWDYLPIESRPE) contacts NAD(+). Residues arginine 99, arginine 109, arginine 138, and aspartate 227 each coordinate substrate. Residues aspartate 227, aspartate 251, and aspartate 255 each coordinate Mg(2+). 285–297 (GSAPDIEGKNIAN) is an NAD(+) binding site.

The protein belongs to the isocitrate and isopropylmalate dehydrogenases family. LeuB type 1 subfamily. Homodimer. It depends on Mg(2+) as a cofactor. Mn(2+) is required as a cofactor.

Its subcellular location is the cytoplasm. The enzyme catalyses (2R,3S)-3-isopropylmalate + NAD(+) = 4-methyl-2-oxopentanoate + CO2 + NADH. Its pathway is amino-acid biosynthesis; L-leucine biosynthesis; L-leucine from 3-methyl-2-oxobutanoate: step 3/4. Functionally, catalyzes the oxidation of 3-carboxy-2-hydroxy-4-methylpentanoate (3-isopropylmalate) to 3-carboxy-4-methyl-2-oxopentanoate. The product decarboxylates to 4-methyl-2 oxopentanoate. The sequence is that of 3-isopropylmalate dehydrogenase from Buchnera aphidicola subsp. Schizaphis graminum (strain Sg).